The sequence spans 608 residues: Cytoplasmic dynein 1 intermediate chain 1 (608 aa).

Composition is skewed to basic and acidic residues over residues 1–13 (MSDK…ELER) and 20–60 (QIRE…RETE). The segment at 1-106 (MSDKSDLKAE…SGDLGPLTRR (106 aa)) is disordered. An N-acetylserine modification is found at S2. A Phosphoserine modification is found at S50. Over residues 70 to 79 (PEPPLVPTPM) the composition is skewed to pro residues. The segment covering 80–90 (SPSSKSVSTPS) has biased composition (low complexity). S83 bears the Phosphoserine mark. Phosphothreonine is present on T88. 3 positions are modified to phosphoserine: S90, S94, and S97. The tract at residues 110-126 (KLGVSKITQVDFLPREV) is interaction with DYNLT1. The segment at 132–184 (ETQTPLATHQSEEDEDDEEMVEPKGDQDSEQENEDKKQEVKEAPPRELTEEEK) is disordered. At T139 the chain carries Phosphothreonine. Phosphoserine occurs at positions 142 and 160. A compositionally biased stretch (basic and acidic residues) spans 165 to 184 (EDKKQEVKEAPPRELTEEEK). WD repeat units follow at residues 248–297 (SKHR…TTPE), 301–341 (HCQS…RTPV), 350–391 (AHTH…TPQE), 400–440 (SKPV…AGIG), 445–490 (GHQG…PLYS), 493–533 (DNAD…EVPT), and 539–578 (EGAS…VPHN). A Phosphoserine modification is found at S598.

It belongs to the dynein intermediate chain family. In terms of assembly, homodimer. The cytoplasmic dynein 1 complex consists of two catalytic heavy chains (HCs) and a number of non-catalytic subunits presented by intermediate chains (ICs), light intermediate chains (LICs) and light chains (LCs); the composition seems to vary in respect to the IC, LIC and LC composition. The heavy chain homodimer serves as a scaffold for the probable homodimeric assembly of the respective non-catalytic subunits. The ICs and LICs bind directly to the HC dimer and the LCs assemble on the IC dimer. Interacts with DYNC1H1. Interacts with DYNLT1 and DYNLT3. Interacts with DCTN1. Interacts with MCRS1; the interaction is required for the proper distribution of centriolar satellites.

It localises to the cytoplasm. The protein resides in the chromosome. It is found in the centromere. The protein localises to the kinetochore. Its subcellular location is the cytoskeleton. It localises to the spindle pole. Functionally, acts as one of several non-catalytic accessory components of the cytoplasmic dynein 1 complex that are thought to be involved in linking dynein to cargos and to adapter proteins that regulate dynein function. Cytoplasmic dynein 1 acts as a motor for the intracellular retrograde motility of vesicles and organelles along microtubules. The intermediate chains mediate the binding of dynein to dynactin via its 150 kDa component (p150-glued) DCTN1. May play a role in mediating the interaction of cytoplasmic dynein with membranous organelles and kinetochores. In Bos taurus (Bovine), this protein is Cytoplasmic dynein 1 intermediate chain 1 (DYNC1I1).